A 1310-amino-acid chain; its full sequence is PAN2-PAN3 deadenylation complex catalytic subunit pan2 (1310 aa).

WD repeat units follow at residues 22–61 (YHAG…RFTA), 67–105 (ETDG…SIRH), 106–144 (ESMQ…GEVV), and 145–184 (KELP…IKKQ). Positions 318–463 (QFTEIGIPPR…NNDHWSLRPE (146 aa)) are linker. In terms of domain architecture, USP spans 463-850 (EAPPEYRICE…MPVVVMFQVK (388 aa)). 8 residues coordinate Zn(2+): H525, C530, C535, C538, C645, C648, C700, and C703. In terms of domain architecture, Exonuclease spans 897–1070 (IAIDTEFIRL…EDAQTALKLY (174 aa)). A divalent metal cation contacts are provided by D900, E902, D1009, and D1062. Residues 1121 to 1169 (TPPVPAPGTTEGSFEISNSSTATTGGSALSATGGMGSASASSSMPSTPV) are disordered. Low complexity predominate over residues 1139 to 1168 (SSTATTGGSALSATGGMGSASASSSMPSTP).

This sequence belongs to the peptidase C19 family. PAN2 subfamily. In terms of assembly, forms a heterotrimer with an asymmetric homodimer of the regulatory subunit par-2/pan3 to form the poly(A)-nuclease (PAN) deadenylation complex. Requires a divalent metal cation as cofactor.

It localises to the cytoplasm. It carries out the reaction Exonucleolytic cleavage of poly(A) to 5'-AMP.. Its activity is regulated as follows. Positively regulated by the regulatory subunit par-2/pan3. Catalytic subunit of the poly(A)-nuclease (PAN) deadenylation complex, one of two cytoplasmic mRNA deadenylases involved in mRNA turnover. PAN specifically shortens poly(A) tails of RNA and the activity is stimulated by poly(A)-binding protein pabp-1. PAN deadenylation is followed by rapid degradation of the shortened mRNA tails by the CCR4-NOT complex. Deadenylated mRNAs are then degraded by two alternative mechanisms, namely exosome-mediated 3'-5' exonucleolytic degradation, or deadenylation-dependent mRNA decaping and subsequent 5'-3' exonucleolytic degradation by rgb-30/xrn1. May also be involved in post-transcriptional maturation of mRNA poly(A) tails. This is PAN2-PAN3 deadenylation complex catalytic subunit pan2 (par-1) from Neurospora crassa (strain ATCC 24698 / 74-OR23-1A / CBS 708.71 / DSM 1257 / FGSC 987).